We begin with the raw amino-acid sequence, 563 residues long: Eukaryotic translation initiation factor 3 subunit D-1 (563 aa).

A disordered region spans residues 98-167 (VQKPPHQRGR…GPPPKMRESS (70 aa)). Residues 100 to 121 (KPPHQRGRFRNMRNSRSGRGRN) are compositionally biased toward basic residues. Threonine 128 is modified (phosphothreonine). The interval 291–305 (EFDLLTVNETSVEPP) is RNA gate.

Belongs to the eIF-3 subunit D family. Component of the eukaryotic translation initiation factor 3 (eIF-3) complex. The eIF-3 complex interacts with pix.

It is found in the cytoplasm. Functionally, mRNA cap-binding component of the eukaryotic translation initiation factor 3 (eIF-3) complex, which is involved in protein synthesis of a specialized repertoire of mRNAs and, together with other initiation factors, stimulates binding of mRNA and methionyl-tRNAi to the 40S ribosome. The eIF-3 complex specifically targets and initiates translation of a subset of mRNAs involved in cell proliferation. In the eIF-3 complex, eif3d specifically recognizes and binds the 7-methylguanosine cap of a subset of mRNAs. The protein is Eukaryotic translation initiation factor 3 subunit D-1 of Drosophila mojavensis (Fruit fly).